The following is a 646-amino-acid chain: Lipoteichoic acid synthase (646 aa).

The Cytoplasmic segment spans residues 1 to 7 (MSSQKKK). A helical transmembrane segment spans residues 8–28 (ISLFAFFLLTVITITLKTYFS). At 29–43 (YYVDFSLGVKGLVQN) the chain is on the extracellular side. The helical transmembrane segment at 44–64 (LILLMNPYSLVALVLSVFLFF) threads the bilayer. At 65–68 (KGKK) the chain is on the cytoplasmic side. A helical transmembrane segment spans residues 69–89 (AFWFMFIGGFLLTFLLYANVV). The Extracellular segment spans residues 90–119 (YFRFFSDFLTFSTLNQVGNVESMGGAVSAS). The helical transmembrane segment at 120–140 (FKWYDFVYFIDTLVYLFILIF) threads the bilayer. Residues 141 to 153 (KTKWLDTKAFSKK) lie on the Cytoplasmic side of the membrane. The chain crosses the membrane as a helical span at residues 154 to 174 (FVPVVMAASVALFFLNLAFAE). The Extracellular segment spans residues 175 to 646 (TDRPELLTRT…ETGPKANSKK (472 aa)). Mn(2+) is bound by residues Glu255 and Thr300. Thr300 is an active-site residue. His416 lines the substrate pocket. The Mn(2+) site is built by Asp475 and His476. Residues 623 to 638 (NPDFKKVNPSKYKYET) are compositionally biased toward basic and acidic residues. A disordered region spans residues 623–646 (NPDFKKVNPSKYKYETGPKANSKK).

The protein belongs to the LTA synthase family. Proteolytically cleaved.

The protein localises to the cell membrane. It is found in the secreted. The protein operates within cell wall biogenesis; lipoteichoic acid biosynthesis. In terms of biological role, catalyzes the polymerization of lipoteichoic acid (LTA) polyglycerol phosphate, a reaction that presumably uses phosphatidylglycerol (PG) as substrate. Is required for staphylococcal growth and cell division process. This Staphylococcus aureus (strain USA300) protein is Lipoteichoic acid synthase (ltaS).